Reading from the N-terminus, the 623-residue chain is Protein skinhead-1 (623 aa).

Disordered regions lie at residues 1–29 (MGGS…FSSV), 158–184 (TEHP…YEYS), 421–451 (YQST…GSVT), and 467–557 (QRHS…LASD). Ser-164 is modified (phosphoserine; by pmk-1). Residues 173–184 (ERPTTSSRYEYS) show a composition bias toward polar residues. The residue at position 430 (Ser-430) is a Phosphoserine; by pmk-1. Low complexity-rich tracts occupy residues 435-449 (GSSG…SPGS), 472-498 (SDCT…ESST), and 511-529 (PSSG…SQSS). Residues 540-623 (SGQRKRGRQS…DRHDKMSHYI (84 aa)) are basic motif.

This sequence belongs to the bZIP family. Skn1 subfamily. In terms of assembly, monomer. Interacts with GATA factor elt-3; interaction may enhance transcriptional activation of target genes. As to quaternary structure, interacts with pgma-5. Interacts with transcription factor mxl-3 (via N-terminus). In terms of processing, cleaved by the aspartic protease ddi-1. Postembryonic intestinal cells.

Its subcellular location is the nucleus. The protein localises to the cytoplasm. The protein resides in the mitochondrion. Transcription factor. Required to specify the fate of ventral blastomeres in the early embryo, and postembryonically for the development of the intestine. Directly regulates expression of zygotically expressed med-1 and med-2 to direct mesendoderm development. In response to oxidative stress and anoxia, required to up-regulate expression of stl-1 mRNA. Involved in regulating innate immunity, acting downstream of the pmk-1 p38/MAPK pathway and probably also downstream of nipi-3. Required for the up-regulation of phase II detoxification genes, including gcs-1 and several glutathione-S-transferase mRNAs in response to oxidative stress generated during pathogenic bacterial infection. Modulates oxidative stress responses in concert with transcription factors such as hcf-1 and elt-3. Regulates the transcription of genes associated with metabolism in response to changes in nutrient availability. In neurons, involved in mitochondrial fusion and behavioral recovery during reoxygenation. Required for riok-1 mRNA expression in the intestine. Downstream of the let-60/Ras, mek-2 and pmk-1 pathway, positively regulates lifespan probably by preventing transcription of insulin-like peptides such as ins-39. Prevents degeneration of dopaminergic CEP neurons in response to high Al(3+) or Mn(2+) levels, probably by promoting the expression of glutathione-S-transferase gst-1. Its function is as follows. Directed by the ER-associated degradation pathway (ERAD), mediates proteasomal homeostasis by regulating the expression of proteasomal subunits such as rpt-3 to confer resistance to proteasomal dysfunction. The polypeptide is Protein skinhead-1 (skn-1) (Caenorhabditis elegans).